The primary structure comprises 622 residues: Probable methionine--tRNA ligase, mitochondrial (622 aa).

A 'HIGH' region motif is present at residues 67–79 (PIFYVNASPHVGH). A 'KMSKS' region motif is present at residues 366–370 (KMSKS). Lysine 369 is a binding site for ATP. The disordered stretch occupies residues 592–622 (LDDIKGMGPDAGSKKHSSGNKPSSGNKKPTA). Over residues 610 to 622 (GNKPSSGNKKPTA) the composition is skewed to low complexity.

It belongs to the class-I aminoacyl-tRNA synthetase family.

It is found in the mitochondrion matrix. It carries out the reaction tRNA(Met) + L-methionine + ATP = L-methionyl-tRNA(Met) + AMP + diphosphate. The sequence is that of Probable methionine--tRNA ligase, mitochondrial from Neurospora crassa (strain ATCC 24698 / 74-OR23-1A / CBS 708.71 / DSM 1257 / FGSC 987).